A 2395-amino-acid chain; its full sequence is Centrosomal protein of 295 kDa (2395 aa).

Residues 1-540 (MKRKVMNGKL…KQADHLEVRP (540 aa)) form a necessary for centriole targeting and microtubule association region. A Phosphoserine modification is found at serine 13. Coiled coils occupy residues 53-84 (QRRNQQVSHLAEELRAEWEEAQSQKIQNLEKL), 114-148 (AERKTKAEARHKEALKAQKKQKEMLMKQKTRHIKA), 209-277 (DAHL…KRQT), 488-538 (ARHK…HLEV), and 567-592 (QQNRLHKQTVETARKRLLEYQTVLKE). Disordered regions lie at residues 602–643 (LIPD…PVQP), 660–681 (GHIPQRQGETARAKQSVESQER), and 735–764 (SDSQQISSEDSENISSKPTEPSSSLPLMPE). At serine 634 the chain carries Phosphoserine. Over residues 735-750 (SDSQQISSEDSENISS) the composition is skewed to low complexity. Positions 817-848 (GQLELQKKVLQERQEAQEKLLSCTQKELEEQT) form a coiled coil. 3 disordered regions span residues 864–893 (SLPSASAESGNIQTSSTKSDATVSSDSMDN), 966–986 (ADTQSRKIQKPPLPTNKKGLL), and 1212–1272 (VDPE…SKVT). Over residues 1219–1250 (FQFSPQTQENRSSQQTGFSSFTPSLRQPSCVS) the composition is skewed to polar residues. Residues 1444 to 1488 (HDDLQALQQQLDVHREAIRSCQDIQEELLLQRLNKLEQRVSSKQI) are a coiled coil. Serine 1565 is subject to Phosphoserine. Low complexity predominate over residues 1677 to 1692 (PWGDSSQGSSSGDQPG). Disordered stretches follow at residues 1677–1715 (PWGDSSQGSSSGDQPGAAAVHAEHSGESLGKELSGRASK), 1819–1845 (SEEEEEEEACTNLSPLMKPDDEVETQE), 1875–1899 (ESFSEQTEHQEQESSSKEEETGSLS), 1989–2013 (DLSSPGTSQEDRDFYQQNSESSSEK), and 2354–2395 (NKTP…SQCI). Residues 1697–1710 (HAEHSGESLGKELS) are compositionally biased toward basic and acidic residues. Residues 1880 to 1894 (QTEHQEQESSSKEEE) are compositionally biased toward basic and acidic residues. Residues 2329-2395 (SLGEAFMKRK…TAKRNRSQCI (67 aa)) form an ALMS motif region. Over residues 2376-2388 (HLKEAVSGDETAK) the composition is skewed to basic and acidic residues.

In terms of assembly, interacts (via ALMS motif) with microtubules; this interaction is direct.

The protein localises to the cytoplasm. The protein resides in the cytoskeleton. It is found in the microtubule organizing center. It localises to the centrosome. Its subcellular location is the centriole. The protein localises to the spindle. Functionally, centriole-enriched microtubule-binding protein involved in centriole biogenesis. Essential for the generation of the distal portion of new-born centrioles in a CPAP- and CEP120-mediated elongation dependent manner during the cell cycle S/G2 phase after formation of the initiating cartwheel structure. Required for the recruitment of centriolar proteins, such as POC1B, POC5 and CEP135, into the distal portion of centrioles. Also required for centriole-to-centrosome conversion during mitotic progression, but is dispensable for cartwheel removal or centriole disengagement. Binds to and stabilizes centriolar microtubule. May be involved in ciliogenesis. This Rattus norvegicus (Rat) protein is Centrosomal protein of 295 kDa.